Here is a 190-residue protein sequence, read N- to C-terminus: RNA-binding protein OPG065 (190 aa).

Residues 5 to 70 enclose the Z-binding domain; it reads YIDERSDAEI…DIPPRWFMTT (66 aa). The 68-residue stretch at 117-184 folds into the DRBM domain; it reads NPVTIINEYC…AKLAVDKLLG (68 aa).

This sequence belongs to the orthopoxvirus OPG065 family. In terms of assembly, interacts with host G1P2/ISG15. Interacts with host EIF2AK2/PKR. Interacts with host ZBP1.

RNA-binding protein that plays a role in the inhibition of multiple cellular antiviral responses activated by double-stranded RNA (dsRNA), such as inhibition of PKR activation, necroptosis, and IFN-mediated antiviral activities. Recognizes and binds Z-RNA structures via its Z-binding domain and dsRNA via its DRBM domain: RNA-binding activity is required to escape host ZBP1-dependent necroptosis. Mechanistically, the Z-binding domain binds Z-RNAs that are produced during vaccinia virus infection, thereby competing with Z-RNA detection by host ZBP1, suppressing ZBP1-dependent necroptosis. Acts as a key inhibitor of the interferon response by blocking the phosphorylation and subsequent activation of IRF3 and IRF7 kinases that are required for interferon-alpha gene expression. Inhibits NF-kappa-B activation and the ubiquitin-like protein ISG15, which is an early antiviral protein. The binding with host ISG15 subsequently blocks host ISGylation. The sequence is that of RNA-binding protein OPG065 (OPG065) from Homo sapiens (Human).